The following is a 378-amino-acid chain: UPF0754 membrane protein BCE_0952 (378 aa).

2 consecutive transmembrane segments (helical) span residues methionine 1–threonine 21 and tyrosine 357–leucine 377.

Belongs to the UPF0754 family.

Its subcellular location is the cell membrane. The protein is UPF0754 membrane protein BCE_0952 of Bacillus cereus (strain ATCC 10987 / NRS 248).